Consider the following 82-residue polypeptide: RNA-binding protein Hfq (82 aa).

Residues 10 to 69 (DPFLNALRREHVPVSIYLVNGIKLQGQIESFDQYVVLLRNTVTQMVYKHAISTIVPGRAV) form the Sm domain.

This sequence belongs to the Hfq family. Homohexamer.

In terms of biological role, RNA chaperone that binds small regulatory RNA (sRNAs) and mRNAs to facilitate mRNA translational regulation in response to envelope stress, environmental stress and changes in metabolite concentrations. Also binds with high specificity to tRNAs. This is RNA-binding protein Hfq from Albidiferax ferrireducens (strain ATCC BAA-621 / DSM 15236 / T118) (Rhodoferax ferrireducens).